We begin with the raw amino-acid sequence, 467 residues long: 3-isopropylmalate dehydratase large subunit (467 aa).

[4Fe-4S] cluster is bound by residues Cys-349, Cys-409, and Cys-412.

The protein belongs to the aconitase/IPM isomerase family. LeuC type 1 subfamily. As to quaternary structure, heterodimer of LeuC and LeuD. [4Fe-4S] cluster serves as cofactor.

The catalysed reaction is (2R,3S)-3-isopropylmalate = (2S)-2-isopropylmalate. It functions in the pathway amino-acid biosynthesis; L-leucine biosynthesis; L-leucine from 3-methyl-2-oxobutanoate: step 2/4. Functionally, catalyzes the isomerization between 2-isopropylmalate and 3-isopropylmalate, via the formation of 2-isopropylmaleate. This chain is 3-isopropylmalate dehydratase large subunit, found in Vibrio cholerae serotype O1 (strain ATCC 39541 / Classical Ogawa 395 / O395).